Consider the following 229-residue polypeptide: Large ribosomal subunit protein bL25 (229 aa).

2 disordered regions span residues methionine 1–arginine 21 and proline 187–aspartate 229. The segment covering serine 196–alanine 207 has biased composition (acidic residues).

This sequence belongs to the bacterial ribosomal protein bL25 family. CTC subfamily. In terms of assembly, part of the 50S ribosomal subunit; part of the 5S rRNA/L5/L18/L25 subcomplex. Contacts the 5S rRNA. Binds to the 5S rRNA independently of L5 and L18.

In terms of biological role, this is one of the proteins that binds to the 5S RNA in the ribosome where it forms part of the central protuberance. The chain is Large ribosomal subunit protein bL25 from Erythrobacter litoralis (strain HTCC2594).